The primary structure comprises 166 residues: MSKSICSTGLRWLWVVVAVLIIDLGSKFLILQNFALGETVPLFPSLNLHYARNYGAAFSFLADSGGWQRWFFSGIAIGICVVLTVLMYRSKATQKLNNIAYALIIGGALGNLFDRLWHGFVVDMIDFYVGDWHFATFNLADSAICIGAALIVLEGFLPKPTAKEQA.

3 helical membrane passes run 12–32 (WLWVVVAVLIIDLGSKFLILQ), 70–90 (WFFSGIAIGICVVLTVLMYRS), and 102–122 (ALIIGGALGNLFDRLWHGFVV). Catalysis depends on residues D123 and D141. The helical transmembrane segment at 137-157 (FNLADSAICIGAALIVLEGFL) threads the bilayer.

This sequence belongs to the peptidase A8 family.

It is found in the cell inner membrane. It catalyses the reaction Release of signal peptides from bacterial membrane prolipoproteins. Hydrolyzes -Xaa-Yaa-Zaa-|-(S,diacylglyceryl)Cys-, in which Xaa is hydrophobic (preferably Leu), and Yaa (Ala or Ser) and Zaa (Gly or Ala) have small, neutral side chains.. It participates in protein modification; lipoprotein biosynthesis (signal peptide cleavage). Functionally, this protein specifically catalyzes the removal of signal peptides from prolipoproteins. The polypeptide is Lipoprotein signal peptidase (Klebsiella pneumoniae (strain 342)).